Consider the following 105-residue polypeptide: Large ribosomal subunit protein uL24 (105 aa).

It belongs to the universal ribosomal protein uL24 family. As to quaternary structure, part of the 50S ribosomal subunit.

In terms of biological role, one of two assembly initiator proteins, it binds directly to the 5'-end of the 23S rRNA, where it nucleates assembly of the 50S subunit. One of the proteins that surrounds the polypeptide exit tunnel on the outside of the subunit. The chain is Large ribosomal subunit protein uL24 from Acinetobacter baumannii (strain AB307-0294).